The primary structure comprises 48 residues: uncharacterized protein (48 aa).

Belongs to the ELIP/psbS family.

Its subcellular location is the plastid. The protein localises to the chloroplast. Functionally, possible role in chlorophyll and/or carotenoid binding. This is an uncharacterized protein from Pyropia yezoensis (Susabi-nori).